The primary structure comprises 389 residues: uncharacterized protein (389 aa).

4 helical membrane passes run 31 to 51 (LFIV…VEVI), 96 to 116 (IMQI…ALLV), 123 to 143 (APLV…MFPP), and 152 to 172 (MIDA…LPSS).

It to M.tuberculosis Rv2571c.

Its subcellular location is the cell membrane. This is an uncharacterized protein from Corynebacterium glutamicum (strain ATCC 13032 / DSM 20300 / JCM 1318 / BCRC 11384 / CCUG 27702 / LMG 3730 / NBRC 12168 / NCIMB 10025 / NRRL B-2784 / 534).